The primary structure comprises 551 residues: UvrABC system protein C (551 aa).

A GIY-YIG domain is found at 12–87; that stretch reads EKPGVYIFKN…IFKHKPKYNI (76 aa). Residues 193–228 form the UVR domain; it reads EFVKDYIEQKMNYHSKMLDFENAAKYRDLLLSFEKL.

Belongs to the UvrC family. As to quaternary structure, interacts with UvrB in an incision complex.

It localises to the cytoplasm. Functionally, the UvrABC repair system catalyzes the recognition and processing of DNA lesions. UvrC both incises the 5' and 3' sides of the lesion. The N-terminal half is responsible for the 3' incision and the C-terminal half is responsible for the 5' incision. The chain is UvrABC system protein C from Thermosipho africanus (strain TCF52B).